The chain runs to 130 residues: Con-Ins G2 (130 aa).

The first 24 residues, M1–T24, serve as a signal peptide directing secretion. 4 disulfide bridges follow: C29–C100, C41–C103, C53–C116, and C102–C107. P34 bears the 4-hydroxyproline; partial mark. Residues E54 to S74 are disordered. A propeptide spans R59 to R92 (c peptide). The residue at position 111 (E111) is a 4-carboxyglutamate; partial.

Belongs to the insulin family. Heterodimer of A and B chains; disulfide-linked. In terms of tissue distribution, expressed by the venom gland.

It localises to the secreted. Functionally, this venom insulin, from a fish-hunting cone snail, facilitates prey capture by rapidly inducing hypoglycemic shock. Intraperitoneal injection of this peptide into zebrafish lowers blood glucose with the same potency than human insulin. In vivo, when applied to water, this peptide reduces overall locomotor activity of zebrafish larvae, observed as a significant decrease in the percentage of time spent swimming and movement frequency. This is Con-Ins G2 from Conus geographus (Geography cone).